Reading from the N-terminus, the 301-residue chain is Acetylglutamate kinase (301 aa).

Substrate contacts are provided by residues 68–69 (GG), Arg-90, and Asn-195.

This sequence belongs to the acetylglutamate kinase family. ArgB subfamily.

The protein localises to the cytoplasm. It catalyses the reaction N-acetyl-L-glutamate + ATP = N-acetyl-L-glutamyl 5-phosphate + ADP. It functions in the pathway amino-acid biosynthesis; L-arginine biosynthesis; N(2)-acetyl-L-ornithine from L-glutamate: step 2/4. In terms of biological role, catalyzes the ATP-dependent phosphorylation of N-acetyl-L-glutamate. This is Acetylglutamate kinase from Pseudomonas putida (strain ATCC 700007 / DSM 6899 / JCM 31910 / BCRC 17059 / LMG 24140 / F1).